Reading from the N-terminus, the 132-residue chain is MPTIQQLIRHGRSVKASKTASPALEKCPQKRGVCTRVYTTTPKKPNSALRKVARVRLSNKIEVTAYIPGEGHNLQEHSIVLIRGGRVKDLPGVRYHIVRGSLDTSGVADRRQSRSKYGAKQPKEGGAAKGKK.

A 3-methylthioaspartic acid modification is found at aspartate 89. The disordered stretch occupies residues 103–132 (DTSGVADRRQSRSKYGAKQPKEGGAAKGKK).

It belongs to the universal ribosomal protein uS12 family. In terms of assembly, part of the 30S ribosomal subunit. Contacts proteins S8 and S17. May interact with IF1 in the 30S initiation complex.

Functionally, with S4 and S5 plays an important role in translational accuracy. Its function is as follows. Interacts with and stabilizes bases of the 16S rRNA that are involved in tRNA selection in the A site and with the mRNA backbone. Located at the interface of the 30S and 50S subunits, it traverses the body of the 30S subunit contacting proteins on the other side and probably holding the rRNA structure together. The combined cluster of proteins S8, S12 and S17 appears to hold together the shoulder and platform of the 30S subunit. The protein is Small ribosomal subunit protein uS12 of Chlorobium phaeovibrioides (strain DSM 265 / 1930) (Prosthecochloris vibrioformis (strain DSM 265)).